An 880-amino-acid polypeptide reads, in one-letter code: Alanine--tRNA ligase (880 aa).

Positions 566, 570, 668, and 672 each coordinate Zn(2+).

Belongs to the class-II aminoacyl-tRNA synthetase family. Zn(2+) is required as a cofactor.

It localises to the cytoplasm. The enzyme catalyses tRNA(Ala) + L-alanine + ATP = L-alanyl-tRNA(Ala) + AMP + diphosphate. Its function is as follows. Catalyzes the attachment of alanine to tRNA(Ala) in a two-step reaction: alanine is first activated by ATP to form Ala-AMP and then transferred to the acceptor end of tRNA(Ala). Also edits incorrectly charged Ser-tRNA(Ala) and Gly-tRNA(Ala) via its editing domain. The sequence is that of Alanine--tRNA ligase from Trichormus variabilis (strain ATCC 29413 / PCC 7937) (Anabaena variabilis).